The primary structure comprises 263 residues: Endonuclease 8 (263 aa).

Residue proline 2 is the Schiff-base intermediate with DNA of the active site. The active-site Proton donor is glutamate 3. Catalysis depends on lysine 53, which acts as the Proton donor; for beta-elimination activity. DNA-binding residues include glutamine 70, arginine 125, and asparagine 169. An FPG-type zinc finger spans residues 229–263; the sequence is KVFHRDGESCERCGGIIERTMLSSRPFYWCPHCQR. Residue arginine 253 is the Proton donor; for delta-elimination activity of the active site.

This sequence belongs to the FPG family. Zn(2+) is required as a cofactor.

It catalyses the reaction 2'-deoxyribonucleotide-(2'-deoxyribose 5'-phosphate)-2'-deoxyribonucleotide-DNA = a 3'-end 2'-deoxyribonucleotide-(2,3-dehydro-2,3-deoxyribose 5'-phosphate)-DNA + a 5'-end 5'-phospho-2'-deoxyribonucleoside-DNA + H(+). Its function is as follows. Involved in base excision repair of DNA damaged by oxidation or by mutagenic agents. Acts as a DNA glycosylase that recognizes and removes damaged bases. Has a preference for oxidized pyrimidines, such as thymine glycol, 5,6-dihydrouracil and 5,6-dihydrothymine. Has AP (apurinic/apyrimidinic) lyase activity and introduces nicks in the DNA strand. Cleaves the DNA backbone by beta-delta elimination to generate a single-strand break at the site of the removed base with both 3'- and 5'-phosphates. The chain is Endonuclease 8 from Pectobacterium carotovorum subsp. carotovorum (strain PC1).